The primary structure comprises 351 residues: Ribonucleoside-diphosphate reductase subunit M2 B (351 aa).

The tract at residues 1 to 31 (MGDPERPEAAGLDQDERSSSDTNENEIKSNE) is disordered. Fe cation contacts are provided by Asp-100, Glu-131, and His-134. Tyr-138 is an active-site residue. Glu-194, Glu-228, and His-231 together coordinate Fe cation.

It belongs to the ribonucleoside diphosphate reductase small chain family. Heterotetramer with large (RRM1) subunit. Interacts with p53/TP53. Interacts with RRM1 in response to DNA damage. The cofactor is Fe cation.

The protein resides in the cytoplasm. The protein localises to the nucleus. It carries out the reaction a 2'-deoxyribonucleoside 5'-diphosphate + [thioredoxin]-disulfide + H2O = a ribonucleoside 5'-diphosphate + [thioredoxin]-dithiol. In terms of biological role, plays a pivotal role in cell survival by repairing damaged DNA in a p53/TP53-dependent manner. Supplies deoxyribonucleotides for DNA repair in cells arrested at G1 or G2. Contains an iron-tyrosyl free radical center required for catalysis. Forms an active ribonucleotide reductase (RNR) complex with RRM1 which is expressed both in resting and proliferating cells in response to DNA damage. The sequence is that of Ribonucleoside-diphosphate reductase subunit M2 B (RRM2B) from Pongo abelii (Sumatran orangutan).